The chain runs to 194 residues: Outer-membrane lipoprotein LolB (194 aa).

The first 18 residues, methionine 1–glycine 18, serve as a signal peptide directing secretion. Cysteine 19 is lipidated: N-palmitoyl cysteine. Cysteine 19 carries S-diacylglycerol cysteine lipidation.

The protein belongs to the LolB family. As to quaternary structure, monomer.

The protein localises to the cell outer membrane. Plays a critical role in the incorporation of lipoproteins in the outer membrane after they are released by the LolA protein. The protein is Outer-membrane lipoprotein LolB of Aeromonas salmonicida (strain A449).